We begin with the raw amino-acid sequence, 228 residues long: UPF0502 protein Rfer_1648 (228 aa).

Belongs to the UPF0502 family.

This Albidiferax ferrireducens (strain ATCC BAA-621 / DSM 15236 / T118) (Rhodoferax ferrireducens) protein is UPF0502 protein Rfer_1648.